The following is a 588-amino-acid chain: Putative ABC transporter ATP-binding protein PAM_020 (588 aa).

2 ABC transporter domains span residues Ile-6–Glu-247 and Leu-317–Asn-551. Residues Gly-40 to Ser-47 and Gly-351 to Ser-358 each bind ATP.

The protein belongs to the ABC transporter superfamily.

It localises to the cell membrane. Probably part of an ABC transporter complex. Responsible for energy coupling to the transport system. The chain is Putative ABC transporter ATP-binding protein PAM_020 from Onion yellows phytoplasma (strain OY-M).